The following is an 846-amino-acid chain: Interleukin cytokine receptor-related protein 1 (846 aa).

The first 25 residues, Met1 to Thr25, serve as a signal peptide directing secretion. At Glu26 to Thr418 the chain is on the extracellular side. Asn29, Asn79, Asn186, Asn214, Asn339, and Asn395 each carry an N-linked (GlcNAc...) asparagine glycan. Residues Glu388 to Lys409 are disordered. Positions Ser400–Lys409 are enriched in basic and acidic residues. Residues Tyr419–Leu439 form a helical membrane-spanning segment. Over Lys440–His846 the chain is Cytoplasmic. One can recognise an SEFIR domain in the interval Ser476–Thr618. A disordered region spans residues Gly737–Ser771. Acidic residues predominate over residues Thr744–Ser771.

As to quaternary structure, component of a heterodimeric receptor complex composed of ilcr-1 and ilcr-2. The receptor complex interacts with actl-1 and ilc-17.1 with the interaction being mediated by ilcr-2. In terms of tissue distribution, expressed in most neurons.

Its subcellular location is the cell membrane. Forms a receptor complex together with receptor ilcr-2, which upon activation acts as a modulator of neuronal activity. Binding of the ligand ilc-17.1 to the ilcr-1/2 receptor complex triggers a signaling cascade that activates the downstream signaling components actl-1, pik-1 and nfki-1, and results in increased neuronal activity in RMG interneurons in response to input from oxygen-sensing neurons. This leads to increased animal movement and promotes aggregation behavior. This Caenorhabditis elegans protein is Interleukin cytokine receptor-related protein 1.